Reading from the N-terminus, the 1683-residue chain is A-kinase anchor protein SPHKAP (1683 aa).

Polar residues-rich tracts occupy residues 1 to 14 and 289 to 301; these read MDVN…SNVE and AENT…NPSA. 3 disordered regions span residues 1 to 30, 275 to 320, and 582 to 601; these read MDVN…ITSS, RMPS…ATNY, and LLPT…LVTE. A PKA-RII subunit binding domain region spans residues 910–927; that stretch reads FAEELAETVVSMATEIAA. A disordered region spans residues 960–983; that stretch reads LKRKKENSGTGSTVRKHKPPRLSE. 8 positions are modified to phosphoserine: serine 1006, serine 1066, serine 1088, serine 1101, serine 1102, serine 1105, serine 1240, and serine 1269. 2 disordered regions span residues 1359–1387 and 1415–1518; these read VTEG…PTRE and ETDQ…DTSS. The span at 1362-1371 shows a compositional bias: polar residues; the sequence is GNCSPVSSPS. The span at 1469–1490 shows a compositional bias: basic and acidic residues; the sequence is LETREELEVDVLKEDITLDESR. The span at 1492-1504 shows a compositional bias: low complexity; the sequence is PPSSSEESTGSWS.

This sequence belongs to the AKAP110 family. Interacts (via the PKA-RII subunit binding domain) with the RI subunit of PKA. Interacts with SPHK1; the interaction greatly reduces SPHK1 activity. As to expression, abundant in heart ventricle (at protein level).

The protein resides in the cytoplasm. Its function is as follows. Anchoring protein that binds preferentially to the type I regulatory subunit of c-AMP-dependent protein kinase (PKA type I) and targets it to distinct subcellular compartments. May act as a converging factor linking cAMP and sphingosine signaling pathways. Plays a regulatory role in the modulation of SPHK1. The polypeptide is A-kinase anchor protein SPHKAP (Sphkap) (Rattus norvegicus (Rat)).